Here is a 341-residue protein sequence, read N- to C-terminus: Probable UDP-glucuronate 4-epimerase (341 aa).

Tyrosine 152 serves as the catalytic Proton acceptor.

This sequence belongs to the NAD(P)-dependent epimerase/dehydratase family. It depends on NAD(+) as a cofactor.

It catalyses the reaction UDP-alpha-D-glucuronate = UDP-alpha-D-galacturonate. The chain is Probable UDP-glucuronate 4-epimerase from Rhizobium meliloti (strain 1021) (Ensifer meliloti).